Here is a 521-residue protein sequence, read N- to C-terminus: Maturase K (521 aa).

Belongs to the intron maturase 2 family. MatK subfamily.

It is found in the plastid. Its subcellular location is the chloroplast. Its function is as follows. Usually encoded in the trnK tRNA gene intron. Probably assists in splicing its own and other chloroplast group II introns. This chain is Maturase K, found in Kniphofia uvaria (Red-hot poker).